The following is a 147-amino-acid chain: Large ribosomal subunit protein uL11 (147 aa).

Belongs to the universal ribosomal protein uL11 family. Part of the ribosomal stalk of the 50S ribosomal subunit. Interacts with L10 and the large rRNA to form the base of the stalk. L10 forms an elongated spine to which L12 dimers bind in a sequential fashion forming a multimeric L10(L12)X complex. One or more lysine residues are methylated.

Forms part of the ribosomal stalk which helps the ribosome interact with GTP-bound translation factors. The chain is Large ribosomal subunit protein uL11 from Bacteroides thetaiotaomicron (strain ATCC 29148 / DSM 2079 / JCM 5827 / CCUG 10774 / NCTC 10582 / VPI-5482 / E50).